The sequence spans 341 residues: MGRILRGLAGGGDLRVVAAETTDIVEEARRRHGLSPTATAALGRAMTGALLLAQLLLKTPKERITLRVEGTGPLGGLVVEADAFGHVRGYVKNPRAEVPLREDGKLNVGELVGAGALRVDRSLPSGEVYTSTVPLVSGEIAEDLAHYLWQSEQIPSAVLLGVRVKGEGEVEVAGGVAVQVMPGAKEEVLGRLEANLKDLPGLTPLLRERGLEGALEALLAGLGFERTDLRALGYFQNEIPARFRCRCNREKALEALVFFTPEEREEMIVKEGGAEVVCHWCGEVYRFSPEEVRSLVAEVRCPDCGALWLYPKGDGTLARIEGETCRCGRKVELPSETRPQA.

2 disulfide bridges follow: Cys245–Cys247 and Cys278–Cys281.

The protein belongs to the HSP33 family. In terms of processing, under oxidizing conditions two disulfide bonds are formed involving the reactive cysteines. Under reducing conditions zinc is bound to the reactive cysteines and the protein is inactive.

The protein localises to the cytoplasm. Functionally, redox regulated molecular chaperone. Protects both thermally unfolding and oxidatively damaged proteins from irreversible aggregation. Plays an important role in the bacterial defense system toward oxidative stress. This Thermus thermophilus (strain ATCC BAA-163 / DSM 7039 / HB27) protein is 33 kDa chaperonin.